The chain runs to 100 residues: Putative pterin-4-alpha-carbinolamine dehydratase 2 (100 aa).

The protein belongs to the pterin-4-alpha-carbinolamine dehydratase family.

It catalyses the reaction (4aS,6R)-4a-hydroxy-L-erythro-5,6,7,8-tetrahydrobiopterin = (6R)-L-erythro-6,7-dihydrobiopterin + H2O. In Cupriavidus pinatubonensis (strain JMP 134 / LMG 1197) (Cupriavidus necator (strain JMP 134)), this protein is Putative pterin-4-alpha-carbinolamine dehydratase 2.